Consider the following 354-residue polypeptide: Elongation factor Ts (354 aa).

The segment at 81-84 (TDFV) is involved in Mg(2+) ion dislocation from EF-Tu.

It belongs to the EF-Ts family.

It localises to the cytoplasm. Its function is as follows. Associates with the EF-Tu.GDP complex and induces the exchange of GDP to GTP. It remains bound to the aminoacyl-tRNA.EF-Tu.GTP complex up to the GTP hydrolysis stage on the ribosome. This chain is Elongation factor Ts, found in Campylobacter fetus subsp. fetus (strain 82-40).